Consider the following 1484-residue polypeptide: Actin cytoskeleton-regulatory complex protein pan1 (1484 aa).

A compositionally biased stretch (polar residues) spans 1-16 (MYSSSNSFLGGANSTR). The segment at 1–100 (MYSSSNSFLG…QTQPTGFPAS (100 aa)) is disordered. Over residues 17–47 (PGQQPYMQQQPPFSQFGQQQPQNQQTGLAPQ) the composition is skewed to low complexity. The span at 49–67 (TGYNPQFSALGASQLQPQA) shows a compositional bias: polar residues. Residues 173 to 261 (DQAKFEQLFK…ETIKNEVSSM (89 aa)) form the EH 1 domain. In terms of domain architecture, EF-hand 1 spans 205–240 (LPGSDLSRIWVLSDTTKSGQLLFPEFALAMYLCNLR). Disordered stretches follow at residues 289–331 (LLEN…GYQA) and 351–384 (GQASSQNLQPPQMGILNNPQPTGYTGPRPPMPPM). Pro residues predominate over residues 296–305 (PPAPQQPRPQ). The span at 306–316 (QPSNSQLLSQL) shows a compositional bias: low complexity. Positions 352–370 (QASSQNLQPPQMGILNNPQ) are enriched in polar residues. Residues 460–549 (EKKIYDDLFR…PELIPPSTRN (90 aa)) form the EH 2 domain. The EF-hand 2 domain maps to 493-528 (LARNDLEAIWTLADPHNRGRLNMDEFAVAMHLIYRK). Disordered stretches follow at residues 615 to 643 (AGYRSSARRRVGNSGRTPSPAASQASEEE), 793 to 866 (RAAE…HERR), and 893 to 1484 (HIRK…GRVL). A compositionally biased stretch (polar residues) spans 628 to 639 (SGRTPSPAASQA). 2 coiled-coil regions span residues 635–760 (AASQ…AKAH) and 807–843 (DDEEAATRRLEGENARVKAEREKNDSMTRDVEESVKE). Composition is skewed to basic and acidic residues over residues 811–866 (AATR…HERR), 894–913 (IRKEEDSRGSSLEPRSRESS), 937–955 (THEDRVAAARERAQRRIAE), 975–1010 (RQERERREREERVKRAEEEDAKREQERQRRIAEEQR), and 1063–1152 (ALKE…ERQL). Coiled coils occupy residues 965-1011 (QTDA…EQRT) and 1052-1165 (SAKT…SSSD). Positions 1157–1169 (EGLDESSSDEEGP) are enriched in acidic residues. Over residues 1175–1187 (PQDSTPTQSQVLP) the composition is skewed to polar residues. Residues 1192–1208 (PEPPAPPTPVAEPPTVP) are compositionally biased toward pro residues. Residues 1209-1222 (EPEQTTASSSPESS) are compositionally biased toward low complexity. The segment covering 1249 to 1258 (DYPPPTPPEV) has biased composition (pro residues). Polar residues predominate over residues 1265–1274 (QMPDTQSTNP). Acidic residues predominate over residues 1310-1329 (ADDDWSAAESDFESSDDEDD). Polar residues predominate over residues 1356 to 1371 (MDTQSPSSKSATPVQG). Residues 1382–1393 (AEIEPSSVADGA) show a composition bias toward low complexity. 2 stretches are compositionally biased toward pro residues: residues 1394 to 1415 (SPPPPPPPPPPPPPAAAPPPLP) and 1422 to 1445 (GIPPPPPPPMAPPAPPPPPGPPAA). The region spanning 1452-1469 (DRSALLASIQAGKGLRKV) is the WH2 domain. A compositionally biased stretch (polar residues) spans 1472–1484 (NDRSTSTSAGRVL).

Belongs to the PAN1 family. Component of the PAN1 actin cytoskeleton-regulatory complex.

The protein localises to the cell membrane. Its subcellular location is the endosome membrane. The protein resides in the cytoplasm. It localises to the cytoskeleton. It is found in the actin patch. Component of the PAN1 actin cytoskeleton-regulatory complex required for the internalization of endosomes during actin-coupled endocytosis. The complex links the site of endocytosis to the cell membrane-associated actin cytoskeleton. Mediates uptake of external molecules and vacuolar degradation of plasma membrane proteins. Plays a role in the proper organization of the cell membrane-associated actin cytoskeleton and promotes its destabilization. This is Actin cytoskeleton-regulatory complex protein pan1 (pan1) from Emericella nidulans (strain FGSC A4 / ATCC 38163 / CBS 112.46 / NRRL 194 / M139) (Aspergillus nidulans).